A 150-amino-acid chain; its full sequence is 16.6 kDa heat shock protein (150 aa).

A sHSP domain is found at 31–150 (AERCPVLTNV…PQLKAIPISG (120 aa)).

Belongs to the small heat shock protein (HSP20) family. May form oligomeric structures.

The protein resides in the cytoplasm. This Oryza sativa subsp. japonica (Rice) protein is 16.6 kDa heat shock protein (HSP16.6).